Consider the following 312-residue polypeptide: NADPH-dependent alpha-keto amide reductase (312 aa).

4 residues coordinate NADPH: Gly25, Thr26, Arg27, and Asp59. Catalysis depends on proton donor residues Tyr64 and His122. At Ser123 the chain carries Phosphoserine. NADPH-binding residues include Ser157, Gln179, Ser208, Leu210, Thr257, Thr258, Ser259, Ser260, Lys261, and Arg264.

The protein belongs to the aldo/keto reductase family. Monomer. Post-translationally, the N-terminus is blocked.

It is found in the cytoplasm. Its subcellular location is the nucleus. Reduces aromatic alpha-keto amides, aliphatic and aromatic alpha-keto esters, but not beta-keto esters. In Saccharomyces cerevisiae (strain ATCC 204508 / S288c) (Baker's yeast), this protein is NADPH-dependent alpha-keto amide reductase.